A 309-amino-acid chain; its full sequence is Elongator complex protein 5 (309 aa).

2 positions are modified to phosphoserine: Ser3 and Ser4.

Belongs to the ELP5 family. Component of the elongator complex, which consists of ELP1/IKI3, ELP2, ELP3, ELP4, ELP5/IKI1 and ELP6. The elongator complex is composed of two copies of the Elp123 subcomplex (composed of ELP1/IKI3, ELP2 and ELP3) and two copies of the Elp456 subcomplex (composed of ELP4, ELP5/IKI1 and ELP6). The Elp123 subcomplex forms a two-lobed scaffold, which binds the Elp456 subcomplex asymmetrically. In each lobe, ELP2 is tightly sandwiched between ELP1/IKI3 and ELP3. The Elp123 subcomplex binds tRNA through ELP1/IKI3 and ELP3 and can bind 2 tRNAs simultaneously. tRNA-binding by the Elp123 subcomplex induces conformational rearrangements which precisely position the targeted anticodon base in the active site. The Elp456 subcomplex binds tRNA and has ATPase activity. Interacts with KTI11/DPH3.

It is found in the cytoplasm. Its subcellular location is the nucleus. It functions in the pathway tRNA modification; 5-methoxycarbonylmethyl-2-thiouridine-tRNA biosynthesis. In terms of biological role, component of the elongator complex which is required for multiple tRNA modifications, including mcm5U (5-methoxycarbonylmethyl uridine), mcm5s2U (5-methoxycarbonylmethyl-2-thiouridine), and ncm5U (5-carbamoylmethyl uridine). The elongator complex catalyzes formation of carboxymethyluridine in the wobble base at position 34 in tRNAs. It functions as a gamma-toxin target (TOT); disruption of the complex confers resistance to Kluyveromyces lactis toxin zymocin (pGKL1 killer toxin). May also be involved in sensitivity to Pichia inositovora toxin. In Saccharomyces cerevisiae (strain ATCC 204508 / S288c) (Baker's yeast), this protein is Elongator complex protein 5 (IKI1).